The primary structure comprises 148 residues: Large ribosomal subunit protein uL15A (148 aa).

Composition is skewed to basic residues over residues 1 to 13 (MPTH…KLRG) and 21 to 31 (RIGKHRKHPGG). A disordered region spans residues 1–36 (MPTHVSKTRKLRGHVSAGHGRIGKHRKHPGGRGKAG).

This sequence belongs to the universal ribosomal protein uL15 family. As to quaternary structure, component of the large ribosomal subunit (LSU). Mature yeast ribosomes consist of a small (40S) and a large (60S) subunit. The 40S small subunit contains 1 molecule of ribosomal RNA (18S rRNA) and at least 33 different proteins. The large 60S subunit contains 3 rRNA molecules (25S, 5.8S and 5S rRNA) and at least 46 different proteins.

Its subcellular location is the cytoplasm. Its function is as follows. Component of the ribosome, a large ribonucleoprotein complex responsible for the synthesis of proteins in the cell. The small ribosomal subunit (SSU) binds messenger RNAs (mRNAs) and translates the encoded message by selecting cognate aminoacyl-transfer RNA (tRNA) molecules. The large subunit (LSU) contains the ribosomal catalytic site termed the peptidyl transferase center (PTC), which catalyzes the formation of peptide bonds, thereby polymerizing the amino acids delivered by tRNAs into a polypeptide chain. The nascent polypeptides leave the ribosome through a tunnel in the LSU and interact with protein factors that function in enzymatic processing, targeting, and the membrane insertion of nascent chains at the exit of the ribosomal tunnel. The protein is Large ribosomal subunit protein uL15A (rpl2802) of Schizosaccharomyces pombe (strain 972 / ATCC 24843) (Fission yeast).